The chain runs to 270 residues: Formamidopyrimidine-DNA glycosylase (270 aa).

Residue Pro2 is the Schiff-base intermediate with DNA of the active site. Glu3 serves as the catalytic Proton donor. The active-site Proton donor; for beta-elimination activity is the Lys58. Residues His91, Arg110, and Arg151 each coordinate DNA. Residues 236-270 (FAYGRAGEFCKVCGTTLREVKLGQRASVYCPRCQR) form an FPG-type zinc finger. Catalysis depends on Arg260, which acts as the Proton donor; for delta-elimination activity.

It belongs to the FPG family. Monomer. Requires Zn(2+) as cofactor.

The enzyme catalyses Hydrolysis of DNA containing ring-opened 7-methylguanine residues, releasing 2,6-diamino-4-hydroxy-5-(N-methyl)formamidopyrimidine.. It catalyses the reaction 2'-deoxyribonucleotide-(2'-deoxyribose 5'-phosphate)-2'-deoxyribonucleotide-DNA = a 3'-end 2'-deoxyribonucleotide-(2,3-dehydro-2,3-deoxyribose 5'-phosphate)-DNA + a 5'-end 5'-phospho-2'-deoxyribonucleoside-DNA + H(+). Functionally, involved in base excision repair of DNA damaged by oxidation or by mutagenic agents. Acts as a DNA glycosylase that recognizes and removes damaged bases. Has a preference for oxidized purines, such as 7,8-dihydro-8-oxoguanine (8-oxoG). Has AP (apurinic/apyrimidinic) lyase activity and introduces nicks in the DNA strand. Cleaves the DNA backbone by beta-delta elimination to generate a single-strand break at the site of the removed base with both 3'- and 5'-phosphates. The chain is Formamidopyrimidine-DNA glycosylase from Ectopseudomonas mendocina (strain ymp) (Pseudomonas mendocina).